Consider the following 64-residue polypeptide: Conotoxin Am1.1 (64 aa).

The N-terminal stretch at 1–22 (MSCLPVFVILLLLTASGPSVDA) is a signal peptide. The propeptide occupies 23-49 (RLKTKDDVPLSSFRDNAKSTLRRLQDK). Residue P60 is modified to 4-hydroxyproline; partial; in major form.

It belongs to the conotoxin T superfamily. Post-translationally, contains 2 disulfide bonds. In terms of tissue distribution, expressed by the venom duct.

Its subcellular location is the secreted. Functionally, probable toxin that inhibits ion channels. The protein is Conotoxin Am1.1 of Conus amadis (Amadis cone).